A 435-amino-acid chain; its full sequence is Zinc finger CCCH domain-containing protein 17 (435 aa).

2 disordered regions span residues M1–S30 and T58–H107. The C3H1-type 1 zinc-finger motif lies at S28–L54. Over residues S77–G103 the composition is skewed to gly residues. The C3H1-type 2 zinc finger occupies K108–S135. WD repeat units lie at residues G148 to N189, G191 to L225, G227 to E264, G271 to T308, D311 to V348, E355 to R395, and F397 to K435.

The sequence is that of Zinc finger CCCH domain-containing protein 17 from Oryza sativa subsp. japonica (Rice).